The following is a 641-amino-acid chain: Bifunctional protein glk (641 aa).

A glucokinase region spans residues Met-1–Ser-340. Position 23–28 (Ala-23–Thr-28) interacts with ATP. Residues Ser-341–Thr-417 enclose the HTH rpiR-type domain. The tract at residues Ser-341–Asp-641 is putative HTH-type transcriptional regulator. The H-T-H motif DNA-binding region spans Ile-377–Arg-396. Positions Ala-461–Ala-600 constitute an SIS domain. A helical transmembrane segment spans residues Ser-576 to Ile-596.

This sequence in the N-terminal section; belongs to the bacterial glucokinase family.

It localises to the membrane. The enzyme catalyses D-glucose + ATP = D-glucose 6-phosphate + ADP + H(+). The protein is Bifunctional protein glk (glk) of Burkholderia mallei (strain ATCC 23344).